The primary structure comprises 278 residues: Heat stress transcription factor C-2b (278 aa).

The span at 105 to 114 (AAGGGGGGGG) shows a compositional bias: gly residues. The interval 105 to 132 (AAGGGGGGGGGKRRDASADGGGGGGDED) is disordered. Positions 143–179 (LKQEQRTIDDRVAAMWRRVQETERRPKQMLAFLLKVV) are hydrophobic repeat HR-A/B. The short motif at 219–222 (KRAR) is the Nuclear localization signal element.

Belongs to the HSF family. Class C subfamily. As to quaternary structure, homotrimer. Exhibits temperature-dependent phosphorylation.

Its subcellular location is the nucleus. Transcriptional regulator that specifically binds DNA of heat shock promoter elements (HSE). The chain is Heat stress transcription factor C-2b (HSFC2B) from Oryza sativa subsp. japonica (Rice).